Consider the following 298-residue polypeptide: Ethanolamine ammonia-lyase small subunit (298 aa).

Val210, Glu231, and Cys261 together coordinate adenosylcob(III)alamin.

The protein belongs to the EutC family. In terms of assembly, the basic unit is a heterodimer which dimerizes to form tetramers. The heterotetramers trimerize; 6 large subunits form a core ring with 6 small subunits projecting outwards. The cofactor is adenosylcob(III)alamin.

The protein resides in the bacterial microcompartment. The enzyme catalyses ethanolamine = acetaldehyde + NH4(+). It participates in amine and polyamine degradation; ethanolamine degradation. Functionally, catalyzes the deamination of various vicinal amino-alcohols to oxo compounds. Allows this organism to utilize ethanolamine as the sole source of nitrogen and carbon in the presence of external vitamin B12. This is Ethanolamine ammonia-lyase small subunit from Salmonella typhi.